Reading from the N-terminus, the 352-residue chain is Sperm equatorial segment protein 1 (352 aa).

Positions 1 to 19 (MKSLVLLVALLLWSSSVPA) are cleaved as a signal peptide. Asn128 carries an N-linked (GlcNAc...) asparagine glycan. A disordered region spans residues 140 to 203 (IEKEEPEPEP…TESEDVPQLS (64 aa)). Residues 166–193 (TESSTSPYVTSYKSPVTTSDRSTGIEIS) are compositionally biased toward polar residues.

The protein belongs to the SPESP1 family. Glycosylated. In testis there are two predominant forms of 77- and 67-kDa and a form of 47-kDa, whereas in epididymal sperm from caput, corpus, and cauda there are two forms of 47- and 43-kDa. Testis forms contain complex carbohydrate residues. Epididymal sperm forms are N-glycosylated. Then undergoes significant glycosylation in the testis and that the majority of these glycoconjugates are removed by the time sperm reach the caput epididymis.

Its subcellular location is the cytoplasmic vesicle. The protein localises to the secretory vesicle. It localises to the acrosome. Involved in fertilization ability of sperm. The protein is Sperm equatorial segment protein 1 of Macaca fascicularis (Crab-eating macaque).